Consider the following 538-residue polypeptide: Calcium-dependent protein kinase 32 (538 aa).

Positions 1–37 are disordered; it reads MGNCCGTAGSLAQNDNKPKKGRKKQNPFSIDYGLHHG. G2 is lipidated: N-myristoyl glycine. The region spanning 63–321 is the Protein kinase domain; that stretch reads YTLGRELGRG…AQQVLDHPWL (259 aa). Residues 69–77 and K92 contribute to the ATP site; that span reads LGRGEFGVT. D187 functions as the Proton acceptor in the catalytic mechanism. A Phosphoserine modification is found at S227. Residues 327-357 are autoinhibitory domain; the sequence is APNVSLGETVRARLKQFTVMNKLKKRALRVI. EF-hand domains lie at 364 to 399, 400 to 435, 436 to 470, and 471 to 506; these read EEAS…LGHA, IPQD…LRKM, GNDE…DELG, and TSEE…GTDW. Residues D377, S379, K383, E388, D413, D415, D417, Y419, E424, D449, N451, N453, Y455, E460, D484, D486, D488, and R490 each coordinate Ca(2+). S492 carries the phosphoserine modification. Residue E495 participates in Ca(2+) binding.

It belongs to the protein kinase superfamily. Ser/Thr protein kinase family. CDPK subfamily. In terms of assembly, interacts with ABF4. Interacts with CNGC18. In terms of tissue distribution, expressed in embryos and most of the vegetative tissues.

The protein localises to the nucleus. It is found in the membrane. The enzyme catalyses L-seryl-[protein] + ATP = O-phospho-L-seryl-[protein] + ADP + H(+). The catalysed reaction is L-threonyl-[protein] + ATP = O-phospho-L-threonyl-[protein] + ADP + H(+). Its activity is regulated as follows. Activated by calcium. Autophosphorylation may play an important role in the regulation of the kinase activity. Its function is as follows. May play a role in signal transduction pathways that involve calcium as a second messenger. Involved in maintaining Ca2+ homeostasis in pollen tube tips by regulating CNGC18. Functions as regulator of the calcium-mediated abscisic acid (ABA) signaling pathway. Phosphorylates ABA-responsive transcription factor ABF4 in vitro. This is Calcium-dependent protein kinase 32 from Arabidopsis thaliana (Mouse-ear cress).